Consider the following 372-residue polypeptide: MLSTAFITLVRSGRNQVKKRVLLSSILLQDHRQMTPACYCSISEPRCSRFDPDGSGQPATWDNFGIWDNRIDEPILLPPSIKYGKPIPKISLENVGCASLIGKRKENEDRFGFAQLTEEVLYFAVYDGHGGPAAADFCHTHMEKCVTDLLPREKDLETVLTLAFLEIDKAFSSYAHLSADASLLTSGTTATVALLRDGVELVVASVGDSRALLCRKGKPMKLTTDHTPERKDEKERIKKCGGFVAWNSLGQPHVNGRLAMTRSIGDLDLKASGVIAEPETTRIKLYHADDSFLVLTTDGINFMVNSQEICDFVNQCHDPKEAAHAVTEQAIQYGTEDNSTAVVVPFGAWGKYKNSEITFSFSRSFASSGRWA.

Residues 1–29 (MLSTAFITLVRSGRNQVKKRVLLSSILLQ) constitute a mitochondrion transit peptide. A critical for association with the BCKDH complex region spans residues 46-61 (RCSRFDPDGSGQPATW). One can recognise a PPM-type phosphatase domain in the interval 94-346 (NVGCASLIGK…DNSTAVVVPF (253 aa)). The Mn(2+) site is built by D127 and G128. S248 is subject to Phosphoserine. Residues D298 and D337 each coordinate Mn(2+).

This sequence belongs to the PP2C family. Interacts with E1 and E2 components of the branched-chain alpha-ketoacid dehydrogenase (BCKDH) complex. Interacts with both BCKDHA and BCKDHB chains of the E1 subunit. Interacts with the 24-meric DBT/E2 core of the BCKD complex with a 1:1 stoichiometry; the N-terminal region (residues 49-61) of PPM1K and C-terminal linker of the lipoyl domain of DBT/E2 (residues 145-160) are critical for this interaction whereas the lipoyl prosthetic group is dispensable. Competes with BCKDK for binding to DBT/E2; this interaction is modulated by branched-chain alpha-keto acids (BCKAs). At steady state, BCKDH holoenzyme preferentially binds BCKDK and BCKDHA/E1 is phosphorylated. In response to high levels of BCKAs, BCKDK is replaced by PPM1K leading to BCKDHA/E1 dephosphorylation. Mn(2+) is required as a cofactor.

The protein resides in the mitochondrion matrix. The enzyme catalyses O-phospho-L-seryl-[3-methyl-2-oxobutanoate dehydrogenase] + H2O = L-seryl-[3-methyl-2-oxobutanoate dehydrogenase] + phosphate. It catalyses the reaction O-phospho-L-seryl-[protein] + H2O = L-seryl-[protein] + phosphate. It participates in protein modification. Functionally, serine/threonine-protein phosphatase component of macronutrients metabolism. Together with BCKDK serves as a metabolic regulatory node that coordinates branched-chain amino acids (BCAAs) and protein synthesis with glucose and lipid metabolism via two distinct phosphoprotein targets: BCKDHA/E1a subunit of the branched-chain alpha-ketoacid dehydrogenase (BCKDH) complex and ACLY, a lipogenic enzyme of Krebs cycle. At high levels of branched-chain ketoacids (BCKAs), dephosphorylates and activates mitochondrial BCKDH complex, a multisubunit complex consisting of three components, heterotetrameric E1 composed of BCKDHA and BCKDHB chains, 24-meric E2 core composed of DBT and homodimeric E3 composed of DLD, each involved in different steps of BCAA catabolism. Tightly associates with the E2 subunit of BCKDH complex and dephosphorylates Ser-333 of BCKDHA chain of the E1 subunit likely through on-off binding to individual E2 subunits of the 24-meric E2 core to increase the efficiency of the dephosphorylation reaction. Appears to dephosphorylate and inactivate cytosolic ACLY in response to changes of cellular carbohydrate abundance. Overnutrition and in particular high-fructose diet, activates MLXIPL/ChREBP leading to increased BCKDK to PPM1K ratio, phosphorylation of ACLY on Ser-454 and activation of its enzymatic activity that ultimately results in the generation of acetyl-CoA and malonyl-CoA immediate substrates of de novo lipogenesis. Recognizes phosphosites having SxS or RxxS motifs and strictly depends on Mn(2+) ions for the phosphatase activity. Regulates Ca(2+)-induced opening of mitochondrial transition pore and apoptotic cell death. This chain is Protein phosphatase Mn(2+)-dependent 1K (Ppm1k), found in Rattus norvegicus (Rat).